Here is a 185-residue protein sequence, read N- to C-terminus: Ribosome-recycling factor (185 aa).

The protein belongs to the RRF family.

Its subcellular location is the cytoplasm. In terms of biological role, responsible for the release of ribosomes from messenger RNA at the termination of protein biosynthesis. May increase the efficiency of translation by recycling ribosomes from one round of translation to another. The polypeptide is Ribosome-recycling factor (Aliivibrio salmonicida (strain LFI1238) (Vibrio salmonicida (strain LFI1238))).